The primary structure comprises 398 residues: Alpha-monoglucosyldiacylglycerol synthase (398 aa).

It belongs to the glycosyltransferase group 1 family. Glycosyltransferase 4 subfamily. Mg(2+) serves as cofactor.

It localises to the cell membrane. It carries out the reaction a 1,2-diacyl-sn-glycerol + UDP-alpha-D-glucose = a 1,2-diacyl-3-O-(alpha-D-glucopyranosyl)-sn-glycerol + UDP + H(+). Activated by the negatively charged lipids phosphatidylglycerol (PG), cardiolipin (CL), dodecylphosphate-rac-glycerol (PDG), 1,2-dioleoyl-phosphatidylglycerol (DOPG) and phosphatidylserine (PS). Functionally, glucosyltransferase involved in the biosynthesis of the non-bilayer-prone membrane lipid alpha-monoglucosyldiacylglycerol. This is a major component for maintaining a certain anionic lipid surface charge density, for balancing the bilayer to non-bilayer phase equilibria and for keeping a constant lipid bilayer spontaneous curvature (curvature packing stress). Catalyzes the transfer of a glucosyl residue from UDP-Glc to diacylglycerol (DAG) acceptor to form the corresponding alpha-glucosyl-DAG (1,2-diacyl-3-O-(alpha-D-glucopyranosyl)-sn-glycerol). It can only use UDP-Glc as sugar donor and DAG is the preferred substrate. The sequence is that of Alpha-monoglucosyldiacylglycerol synthase (mgs) from Acholeplasma laidlawii.